The following is a 378-amino-acid chain: GDP-mannose 3,5-epimerase 1 (378 aa).

NAD(+) contacts are provided by residues 36–62, Asp60, and Asp80; that span reads GAGG…SDWK. Substrate-binding positions include Gly105 and 145 to 147; that span reads SAC. Residues Tyr175 and Lys179 each coordinate NAD(+). Tyr175 acts as the Proton acceptor in catalysis. Residues Asn204, 217–219, Lys226, 242–244, Arg307, and Ser357 each bind substrate; these read EKA and QTR.

This sequence belongs to the NAD(P)-dependent epimerase/dehydratase family. Homodimer. Requires NAD(+) as cofactor.

It carries out the reaction GDP-alpha-D-mannose = GDP-beta-L-gulose. The enzyme catalyses GDP-beta-L-gulose = GDP-beta-L-galactose. It participates in cofactor biosynthesis; L-ascorbate biosynthesis via GDP-alpha-D-mannose pathway; L-ascorbate from GDP-alpha-D-mannose: step 1/5. In terms of biological role, catalyzes a reversible epimerization of GDP-D-mannose that precedes the committed step in the biosynthesis of vitamin C (L-ascorbate), resulting in the hydrolysis of the highly energetic glycosyl-pyrophosphoryl linkage. Able to catalyze 2 distinct epimerization reactions and can release both GDP-L-galactose and GDP-L-gulose from GDP-mannose. The sequence is that of GDP-mannose 3,5-epimerase 1 from Oryza sativa subsp. indica (Rice).